Here is a 378-residue protein sequence, read N- to C-terminus: Uroporphyrinogen decarboxylase (378 aa).

Residues 40 to 44, aspartate 90, tyrosine 167, serine 222, and histidine 355 each bind substrate; that span reads RQAGR.

The protein belongs to the uroporphyrinogen decarboxylase family. As to quaternary structure, homodimer.

The protein localises to the cytoplasm. The catalysed reaction is uroporphyrinogen III + 4 H(+) = coproporphyrinogen III + 4 CO2. The protein operates within porphyrin-containing compound metabolism; protoporphyrin-IX biosynthesis; coproporphyrinogen-III from 5-aminolevulinate: step 4/4. Its function is as follows. Catalyzes the decarboxylation of four acetate groups of uroporphyrinogen-III to yield coproporphyrinogen-III. The sequence is that of Uroporphyrinogen decarboxylase from Psychrobacter cryohalolentis (strain ATCC BAA-1226 / DSM 17306 / VKM B-2378 / K5).